The following is a 328-amino-acid chain: Malate dehydrogenase (328 aa).

12–18 (GAAGQIA) contributes to the NAD(+) binding site. The substrate site is built by R93 and R99. Residues N106, Q113, and 130–132 (VGN) contribute to the NAD(+) site. Residues N132 and R163 each contribute to the substrate site. The active-site Proton acceptor is the H188.

This sequence belongs to the LDH/MDH superfamily. MDH type 2 family.

The catalysed reaction is (S)-malate + NAD(+) = oxaloacetate + NADH + H(+). Catalyzes the reversible oxidation of malate to oxaloacetate. The protein is Malate dehydrogenase of Burkholderia ambifaria (strain ATCC BAA-244 / DSM 16087 / CCUG 44356 / LMG 19182 / AMMD) (Burkholderia cepacia (strain AMMD)).